A 956-amino-acid chain; its full sequence is Transient receptor potential channel pyrexia (956 aa).

Residues 1–491 lie on the Cytoplasmic side of the membrane; it reads MENVRFSIIE…LFLKWRRIRK (491 aa). 8 ANK repeats span residues 132–161, 166–195, 198–227, 231–260, 265–294, 298–327, 331–362, and 366–395; these read RGRT…DPNR, KEVT…SINI, EKRS…DPNT, YTET…DVRS, GKVT…EVDC, SHQT…NVNA, DGRT…DVNK, and YGYT…DITA. The helical transmembrane segment at 492–512 threads the bilayer; sequence FFLMSLAYHTLFVILFTFYVI. At 513–525 the chain is on the extracellular side; that stretch reads WVYVRCCKKEELC. A helical transmembrane segment spans residues 526 to 546; sequence VAPGYVSTIGYLVIILNLILL. The Cytoplasmic segment spans residues 547–565; that stretch reads GKEVFQMAHGLRGYAKYWE. The chain crosses the membrane as a helical span at residues 566–584; that stretch reads NWLQWTIGTGVLLCVTPET. At 585–601 the chain is on the extracellular side; that stretch reads VRTDDLTAVPVWQHHVA. The chain crosses the membrane as a helical span at residues 602–622; that stretch reads AIVILLVWLELMMLVGRFPIF. Residues 623-638 are Cytoplasmic-facing; that stretch reads GVYVQMFTKVAVNFAK. Residues 639-659 traverse the membrane as a helical segment; sequence FLLAYICLLVAFGLSFAVLFN. Residues 660-701 are Extracellular-facing; sequence DYPAFENITWSFLKSITMMSGELEFEDIFYGDYAVKFPVTAH. An N-linked (GlcNAc...) asparagine glycan is attached at Asn-666. A helical transmembrane segment spans residues 702–722; sequence IIFLSFVLLVTVILTNLMVGL. Topologically, residues 723 to 956 are cytoplasmic; that stretch reads AVSDIQGLQV…VASSHIRRHR (234 aa).

It belongs to the transient receptor (TC 1.A.4) family. STrpC subfamily. As to quaternary structure, homooligomer; between isoform A and isoform B. In terms of tissue distribution, expressed in various peripheral nerves and the central nerves in embryos. In adults, it is expressed in sensory neurons lying beneath the bristles around eyes, neurons innervating the bristles on the back of thorax and neurons in maxillary palps, proboscis and antennae. Expressed in multidendritic neurons, which mediate temperature sensing, as well as non-multidendritic neurons in larval epidermis. Localizes ubiquitously throughout neurites.

It is found in the membrane. Functionally, receptor-activated non-selective cation channel involved in protection or tolerance from high temperature stress. Activated by temperatures above 40 degrees Celsius. More permeable to K(+) than to Na(+). May act in stress protection allow flies to survive in natural environments. The chain is Transient receptor potential channel pyrexia (pyx) from Drosophila melanogaster (Fruit fly).